The sequence spans 414 residues: Glucose-1-phosphate adenylyltransferase (414 aa).

Residues Tyr99, Gly164, 181 to 182, and Ser199 contribute to the alpha-D-glucose 1-phosphate site; that span reads EK.

Belongs to the bacterial/plant glucose-1-phosphate adenylyltransferase family. As to quaternary structure, homotetramer.

The enzyme catalyses alpha-D-glucose 1-phosphate + ATP + H(+) = ADP-alpha-D-glucose + diphosphate. It functions in the pathway glycan biosynthesis; glycogen biosynthesis. Functionally, involved in the biosynthesis of ADP-glucose, a building block required for the elongation reactions to produce glycogen. Catalyzes the reaction between ATP and alpha-D-glucose 1-phosphate (G1P) to produce pyrophosphate and ADP-Glc. The sequence is that of Glucose-1-phosphate adenylyltransferase from Bifidobacterium adolescentis (strain ATCC 15703 / DSM 20083 / NCTC 11814 / E194a).